The sequence spans 493 residues: Transcript termination protein A18 (493 aa).

In terms of domain architecture, Helicase ATP-binding spans 100–256 (MIESKRPLYI…NSIINIAKLS (157 aa)). 113 to 120 (LACGFGKT) is a binding site for ATP. The DESH box signature appears at 206–209 (DESH).

The protein belongs to the helicase family. Poxviruses subfamily. In terms of assembly, interacts with G2. Might be part of a transcription complex composed at least of G2, A18, and H5.

Its subcellular location is the virion. In terms of biological role, DNA helicase which seems to act as a postreplicative transcription termination factor. Involved in ATP-dependent release of nascent RNA. Forms a stable complex with single-stranded DNA, and to a lesser extent RNA. This is Transcript termination protein A18 from Rabbitpox virus (strain Utrecht) (RPV).